The chain runs to 268 residues: Single-stranded DNA-binding protein WHY3, chloroplastic (268 aa).

A chloroplast-targeting transit peptide spans 1–75; the sequence is MSQLLSSPPM…KQRFGDSSSS (75 aa). Residues 93-98 are required for ssDNA binding; it reads KGKAAL. Residues 171-185 carry the Nuclear localization signal motif; that stretch reads KGKGSDEGKVRKVLK.

Belongs to the Whirly family. As to quaternary structure, homotetramer.

The protein resides in the plastid. Its subcellular location is the chloroplast. It localises to the nucleus. Functionally, single-stranded DNA-binding protein that functions in both chloroplasts and nucleus. In chloroplasts, maintains plastid genome stability by preventing break-induced and short homology-dependent illegitimate recombinations. In the nucleus, is recruited to a distal element upstream of the kinesin KP1 to mediate the transcriptional repression of KP1. Can bind double-stranded DNA in vivo. This chain is Single-stranded DNA-binding protein WHY3, chloroplastic (WHY3), found in Arabidopsis thaliana (Mouse-ear cress).